Here is a 246-residue protein sequence, read N- to C-terminus: E3 ubiquitin-protein ligase MARCHF2 (246 aa).

The RING-CH-type zinc finger occupies 56–116 (GTQSDGPICR…ELCHTEFAVE (61 aa)). Zn(2+) is bound by residues Cys-64, Cys-67, Cys-80, Cys-82, His-90, Cys-93, Cys-106, and Cys-109. A run of 2 helical transmembrane segments spans residues 138–158 (LFCD…SGWL) and 175–195 (AVGL…WTLV).

Its subcellular location is the endoplasmic reticulum membrane. It is found in the lysosome membrane. It localises to the endosome membrane. It carries out the reaction S-ubiquitinyl-[E2 ubiquitin-conjugating enzyme]-L-cysteine + [acceptor protein]-L-lysine = [E2 ubiquitin-conjugating enzyme]-L-cysteine + N(6)-ubiquitinyl-[acceptor protein]-L-lysine.. Its pathway is protein modification; protein ubiquitination. In terms of biological role, E3 ubiquitin-protein ligase which may be involved in endosomal trafficking. E3 ubiquitin ligases accept ubiquitin from an E2 ubiquitin-conjugating enzyme in the form of a thioester and then directly transfer the ubiquitin to targeted substrates. In Xenopus laevis (African clawed frog), this protein is E3 ubiquitin-protein ligase MARCHF2 (marchf2).